We begin with the raw amino-acid sequence, 177 residues long: Immunity protein CdiI-YPIII (177 aa).

In terms of assembly, interacts with the C-terminal DNase fragment (residues 954-1077) of cognate toxin CdiA-YPIII.

Its function is as follows. Immunity protein component of a toxin-immunity protein module, which functions as a cellular contact-dependent growth inhibition (CDI) system. CDI modules allow bacteria to communicate with and inhibit the growth of closely related neighboring bacteria in a contact-dependent fashion. Neutralizes the toxic activity of cognate toxin CdiA-YPIII (residues 954-1077). Does not inhibit toxic activity of CdiA from other toxin-immunity modules. The chain is Immunity protein CdiI-YPIII from Yersinia pseudotuberculosis serotype O:3 (strain YPIII).